Reading from the N-terminus, the 154-residue chain is Lipoprotein signal peptidase (154 aa).

A run of 3 helical transmembrane segments spans residues 7 to 27 (VLYL…KNYI), 58 to 78 (IFSG…AVVV), and 88 to 108 (NWLF…NFID). Residues D117 and D133 contribute to the active site. The helical transmembrane segment at 128-148 (IFNIADSAITVGIVLVFIYLI) threads the bilayer.

The protein belongs to the peptidase A8 family.

Its subcellular location is the cell membrane. It catalyses the reaction Release of signal peptides from bacterial membrane prolipoproteins. Hydrolyzes -Xaa-Yaa-Zaa-|-(S,diacylglyceryl)Cys-, in which Xaa is hydrophobic (preferably Leu), and Yaa (Ala or Ser) and Zaa (Gly or Ala) have small, neutral side chains.. It functions in the pathway protein modification; lipoprotein biosynthesis (signal peptide cleavage). In terms of biological role, this protein specifically catalyzes the removal of signal peptides from prolipoproteins. The protein is Lipoprotein signal peptidase of Lactobacillus gasseri (strain ATCC 33323 / DSM 20243 / BCRC 14619 / CIP 102991 / JCM 1131 / KCTC 3163 / NCIMB 11718 / NCTC 13722 / AM63).